A 414-amino-acid polypeptide reads, in one-letter code: CCA-adding enzyme (414 aa).

The ATP site is built by Gly8 and Arg11. Positions 8 and 11 each coordinate CTP. Mg(2+) contacts are provided by Asp21 and Asp23. ATP-binding residues include Arg91, Arg137, and Arg140. Residues Arg91, Arg137, and Arg140 each coordinate CTP.

This sequence belongs to the tRNA nucleotidyltransferase/poly(A) polymerase family. Bacterial CCA-adding enzyme type 2 subfamily. Mg(2+) is required as a cofactor.

It carries out the reaction a tRNA precursor + 2 CTP + ATP = a tRNA with a 3' CCA end + 3 diphosphate. The catalysed reaction is a tRNA with a 3' CCA end + 2 CTP + ATP = a tRNA with a 3' CCACCA end + 3 diphosphate. Catalyzes the addition and repair of the essential 3'-terminal CCA sequence in tRNAs without using a nucleic acid template. Adds these three nucleotides in the order of C, C, and A to the tRNA nucleotide-73, using CTP and ATP as substrates and producing inorganic pyrophosphate. tRNA 3'-terminal CCA addition is required both for tRNA processing and repair. Also involved in tRNA surveillance by mediating tandem CCA addition to generate a CCACCA at the 3' terminus of unstable tRNAs. While stable tRNAs receive only 3'-terminal CCA, unstable tRNAs are marked with CCACCA and rapidly degraded. The chain is CCA-adding enzyme from Buchnera aphidicola subsp. Acyrthosiphon pisum (strain 5A).